Here is a 548-residue protein sequence, read N- to C-terminus: Glucose-6-phosphate isomerase 1 (548 aa).

Catalysis depends on Glu-353, which acts as the Proton donor. Catalysis depends on residues His-384 and Lys-512.

Belongs to the GPI family.

It is found in the cytoplasm. It carries out the reaction alpha-D-glucose 6-phosphate = beta-D-fructose 6-phosphate. Its pathway is carbohydrate biosynthesis; gluconeogenesis. It functions in the pathway carbohydrate degradation; glycolysis; D-glyceraldehyde 3-phosphate and glycerone phosphate from D-glucose: step 2/4. Functionally, catalyzes the reversible isomerization of glucose-6-phosphate to fructose-6-phosphate. The polypeptide is Glucose-6-phosphate isomerase 1 (Neisseria gonorrhoeae (strain ATCC 700825 / FA 1090)).